Here is a 1366-residue protein sequence, read N- to C-terminus: ABC multidrug transporter MDR2 (1366 aa).

Residues 52–72 form a helical membrane-spanning segment; it reads IALIVIGTIAGIGAGIPFPLL. The region spanning 56 to 354 is the ABC transmembrane type-1 1 domain; the sequence is VIGTIAGIGA…MAPFMHIFAS (299 aa). The N-linked (GlcNAc...) asparagine glycan is linked to asparagine 84. The next 5 helical transmembrane spans lie at 106–126, 180–200, 202–222, 288–308, and 323–343; these read VLQVIYASILNFVCMYIHTGC, KVGLFIGTISYFVAAYIVAFL, VATIAAMLMSVVPIYFLMAFG, IQFGMLYFVAYASNALAFWQG, and VSVGAVYTVIFVLLDASFVLS. Residues 390–669 form the ABC transporter 1 domain; sequence IELQDVTFNY…DGVYAGMVRL (280 aa). 425–432 provides a ligand contact to ATP; the sequence is GTSGSGKS. A glycan (N-linked (GlcNAc...) asparagine) is linked at asparagine 620. A disordered region spans residues 727–746; it reads PEEADSLPTEPEAKKEKPKQ. Helical transmembrane passes span 768 to 788, 807 to 827, 868 to 888, and 898 to 918; these read LGLITSIMIGVSYTGEAVIFG, GMLFGLLFFILAVAKFAAVIV, LLVALVTSDASALSSLTGTTI, and LFAGVILSHVIAWKIAVVLLA. The ABC transmembrane type-1 2 domain maps to 768–1055; that stretch reads LGLITSIMIG…MFALVPDISK (288 aa). Asparagine 976 carries N-linked (GlcNAc...) asparagine glycosylation. A run of 2 helical transmembrane segments spans residues 995–1015 and 1019–1039; these read FWLSLAYSISTLVYALAYWWG and ILAGMYTQVQFFIVLPALLFS. The region spanning 1122-1361 is the ABC transporter 2 domain; that stretch reads VQFRNVHFRY…CESYRANVIH (240 aa). Residue 1157–1164 participates in ATP binding; it reads GPSGSGKS.

It belongs to the ABC transporter superfamily. ABCB family. Multidrug resistance exporter (TC 3.A.1.201) subfamily.

The protein resides in the cell membrane. Pleiotropic ABC efflux transporter that may be involved in the modulation susceptibility to a wide range of unrelated cytotoxic compounds. Does not act as an efflux pump for azoles, including fluconazole, itraconazole, ketoconazole, miconazole and voriconazole, nor does it modulate susceptibility to cycloheximide. The chain is ABC multidrug transporter MDR2 from Trichophyton rubrum (strain ATCC MYA-4607 / CBS 118892) (Athlete's foot fungus).